We begin with the raw amino-acid sequence, 261 residues long: 4-hydroxy-tetrahydrodipicolinate reductase (261 aa).

NAD(+)-binding positions include 11-16 (GFMGAM), 96-98 (GTT), and 122-125 (APNF). His-152 serves as the catalytic Proton donor/acceptor. His-153 contributes to the (S)-2,3,4,5-tetrahydrodipicolinate binding site. The Proton donor role is filled by Lys-156. Residue 162–163 (GT) participates in (S)-2,3,4,5-tetrahydrodipicolinate binding.

This sequence belongs to the DapB family.

It is found in the cytoplasm. It carries out the reaction (S)-2,3,4,5-tetrahydrodipicolinate + NAD(+) + H2O = (2S,4S)-4-hydroxy-2,3,4,5-tetrahydrodipicolinate + NADH + H(+). The enzyme catalyses (S)-2,3,4,5-tetrahydrodipicolinate + NADP(+) + H2O = (2S,4S)-4-hydroxy-2,3,4,5-tetrahydrodipicolinate + NADPH + H(+). It functions in the pathway amino-acid biosynthesis; L-lysine biosynthesis via DAP pathway; (S)-tetrahydrodipicolinate from L-aspartate: step 4/4. In terms of biological role, catalyzes the conversion of 4-hydroxy-tetrahydrodipicolinate (HTPA) to tetrahydrodipicolinate. This is 4-hydroxy-tetrahydrodipicolinate reductase from Lactobacillus helveticus (strain DPC 4571).